Consider the following 192-residue polypeptide: UPF0149 protein YgfB (192 aa).

It belongs to the UPF0149 family.

This is UPF0149 protein YgfB from Escherichia coli O127:H6 (strain E2348/69 / EPEC).